Consider the following 185-residue polypeptide: Ribose 1,5-bisphosphate phosphokinase PhnN (185 aa).

10 to 17 serves as a coordination point for ATP; sequence GPSGSGKD.

It belongs to the ribose 1,5-bisphosphokinase family.

The catalysed reaction is alpha-D-ribose 1,5-bisphosphate + ATP = 5-phospho-alpha-D-ribose 1-diphosphate + ADP. It participates in metabolic intermediate biosynthesis; 5-phospho-alpha-D-ribose 1-diphosphate biosynthesis; 5-phospho-alpha-D-ribose 1-diphosphate from D-ribose 5-phosphate (route II): step 3/3. Catalyzes the phosphorylation of ribose 1,5-bisphosphate to 5-phospho-D-ribosyl alpha-1-diphosphate (PRPP). The protein is Ribose 1,5-bisphosphate phosphokinase PhnN of Escherichia coli O157:H7.